We begin with the raw amino-acid sequence, 210 residues long: Holliday junction resolvase RecU (210 aa).

The Mg(2+) site is built by threonine 87, aspartate 89, glutamate 102, and glutamine 121.

The protein belongs to the RecU family. It depends on Mg(2+) as a cofactor.

It localises to the cytoplasm. It catalyses the reaction Endonucleolytic cleavage at a junction such as a reciprocal single-stranded crossover between two homologous DNA duplexes (Holliday junction).. In terms of biological role, endonuclease that resolves Holliday junction intermediates in genetic recombination. Cleaves mobile four-strand junctions by introducing symmetrical nicks in paired strands. Promotes annealing of linear ssDNA with homologous dsDNA. Required for DNA repair, homologous recombination and chromosome segregation. The chain is Holliday junction resolvase RecU from Lactobacillus delbrueckii subsp. bulgaricus (strain ATCC 11842 / DSM 20081 / BCRC 10696 / JCM 1002 / NBRC 13953 / NCIMB 11778 / NCTC 12712 / WDCM 00102 / Lb 14).